We begin with the raw amino-acid sequence, 160 residues long: 2-C-methyl-D-erythritol 2,4-cyclodiphosphate synthase (160 aa).

The a divalent metal cation site is built by Asp11 and His13. 4-CDP-2-C-methyl-D-erythritol 2-phosphate-binding positions include 11–13 (DVH) and 37–38 (HS). His45 lines the a divalent metal cation pocket. Residues 59–61 (DIG), 64–68 (FPDTD), 135–138 (TTTE), Phe142, and Arg145 contribute to the 4-CDP-2-C-methyl-D-erythritol 2-phosphate site.

It belongs to the IspF family. In terms of assembly, homotrimer. Requires a divalent metal cation as cofactor.

The enzyme catalyses 4-CDP-2-C-methyl-D-erythritol 2-phosphate = 2-C-methyl-D-erythritol 2,4-cyclic diphosphate + CMP. It participates in isoprenoid biosynthesis; isopentenyl diphosphate biosynthesis via DXP pathway; isopentenyl diphosphate from 1-deoxy-D-xylulose 5-phosphate: step 4/6. In terms of biological role, involved in the biosynthesis of isopentenyl diphosphate (IPP) and dimethylallyl diphosphate (DMAPP), two major building blocks of isoprenoid compounds. Catalyzes the conversion of 4-diphosphocytidyl-2-C-methyl-D-erythritol 2-phosphate (CDP-ME2P) to 2-C-methyl-D-erythritol 2,4-cyclodiphosphate (ME-CPP) with a corresponding release of cytidine 5-monophosphate (CMP). The protein is 2-C-methyl-D-erythritol 2,4-cyclodiphosphate synthase of Alcanivorax borkumensis (strain ATCC 700651 / DSM 11573 / NCIMB 13689 / SK2).